The sequence spans 438 residues: Aspartate--tRNA(Asp) ligase (438 aa).

Glu170 is an L-aspartate binding site. Residues 192-195 (QLYK) are aspartate. Arg214 contacts L-aspartate. ATP contacts are provided by residues 214–216 (RAE), 222–224 (RHL), and Glu361. Residues Glu361 and Ser364 each coordinate Mg(2+). Residues Ser364 and Arg368 each contribute to the L-aspartate site. 409–412 (GAER) provides a ligand contact to ATP.

It belongs to the class-II aminoacyl-tRNA synthetase family. Type 2 subfamily. As to quaternary structure, homodimer. Mg(2+) is required as a cofactor.

Its subcellular location is the cytoplasm. It carries out the reaction tRNA(Asp) + L-aspartate + ATP = L-aspartyl-tRNA(Asp) + AMP + diphosphate. Functionally, catalyzes the attachment of L-aspartate to tRNA(Asp) in a two-step reaction: L-aspartate is first activated by ATP to form Asp-AMP and then transferred to the acceptor end of tRNA(Asp). The polypeptide is Aspartate--tRNA(Asp) ligase (Pyrococcus abyssi (strain GE5 / Orsay)).